The chain runs to 2241 residues: Large tegument protein deneddylase (2241 aa).

Residues 1-238 (MKVTQASCHQ…IDLTGVVRES (238 aa)) form a deubiquitination activity region. Residues 4–226 (TQASCHQGDI…AARLVSTYRD (223 aa)) enclose the Peptidase C76 domain. Active-site residues include Cys24, Asp160, and His162. The interval 239–314 (ADTAATTTTA…STTSKTLATA (76 aa)) is disordered. Low complexity predominate over residues 240 to 250 (DTAATTTTAAP). Positions 251-268 (SLPPLPDPIVDPGCPPGV) are enriched in pro residues. Residues 304–314 (PSTTSKTLATA) show a composition bias toward low complexity. The interaction with inner tegument protein stretch occupies residues 327 to 331 (SSAVP). Disordered stretches follow at residues 1187–1230 (MTET…PPAD) and 2118–2152 (PIARVQQPPRRHRHRAAAAADDDGQIDHAQDDTSR). Basic and acidic residues-rich tracts occupy residues 1190 to 1199 (TSERLDRSLR) and 2142 to 2152 (QIDHAQDDTSR).

The protein belongs to the herpesviridae large tegument protein family. Interacts with host CUL1 and CUL4A; these interactions inhibit the E3 ligase activity of cullins. Interacts with inner tegument protein. Interacts with capsid vertex specific component CVC2. Interacts with the major capsid protein/MCP.

Its subcellular location is the virion tegument. It localises to the host cytoplasm. The protein resides in the host nucleus. It catalyses the reaction Thiol-dependent hydrolysis of ester, thioester, amide, peptide and isopeptide bonds formed by the C-terminal Gly of ubiquitin (a 76-residue protein attached to proteins as an intracellular targeting signal).. In terms of biological role, large tegument protein that plays multiple roles in the viral cycle. During viral entry, remains associated with the capsid while most of the tegument is detached and participates in the capsid transport toward the host nucleus. Plays a role in the routing of the capsid at the nuclear pore complex and subsequent uncoating. Within the host nucleus, acts as a deneddylase and promotes the degradation of nuclear CRLs (cullin-RING ubiquitin ligases) and thereby stabilizes nuclear CRL substrates, while cytoplasmic CRLs remain unaffected. These modifications prevent host cell cycle S-phase progression and create a favorable environment allowing efficient viral genome replication. Participates later in the secondary envelopment of capsids. Indeed, plays a linker role for the association of the outer viral tegument to the capsids together with the inner tegument protein. The polypeptide is Large tegument protein deneddylase (UL48) (Homo sapiens (Human)).